The following is a 433-amino-acid chain: N-lysine methyltransferase SMYD2 (433 aa).

Positions 7 to 241 (GGLERFCSAG…PGDEVFTSYI (235 aa)) constitute an SET domain. Residue 17–19 (KGR) coordinates S-adenosyl-L-methionine. The Zn(2+) site is built by C52, C55, C65, C68, C74, C78, H86, and C90. The MYND-type zinc finger occupies 52 to 90 (CECCFARKEGLSKCGRCKQAFYCDVECQKEDWPLHKLEC). S-adenosyl-L-methionine is bound by residues H137, 206 to 207 (NH), and 258 to 260 (YFF). S283 carries the phosphoserine modification.

The protein belongs to the class V-like SAM-binding methyltransferase superfamily. As to quaternary structure, interacts with RNA polymerase II and HELZ. Interacts with SIN3A and HDAC1. Interacts (via MYND-type zinc finger) with EPB41L3. Interacts (via SET domain) with p53/TP53. Interacts with RB1 and HSP90AA1.

It localises to the cytoplasm. Its subcellular location is the cytosol. The protein localises to the nucleus. It carries out the reaction L-lysyl(4)-[histone H3] + 3 S-adenosyl-L-methionine = N(6),N(6),N(6)-trimethyl-L-lysyl(4)-[histone H3] + 3 S-adenosyl-L-homocysteine + 3 H(+). The enzyme catalyses L-lysyl-[protein] + S-adenosyl-L-methionine = N(6)-methyl-L-lysyl-[protein] + S-adenosyl-L-homocysteine + H(+). Protein-lysine N-methyltransferase that methylates both histones and non-histone proteins, including p53/TP53 and RB1. Specifically trimethylates histone H3 'Lys-4' (H3K4me3) in vivo. The activity requires interaction with HSP90alpha. Shows even higher methyltransferase activity on p53/TP53. Monomethylates 'Lys-370' of p53/TP53, leading to decreased DNA-binding activity and subsequent transcriptional regulation activity of p53/TP53. Monomethylates RB1 at 'Lys-860'. The chain is N-lysine methyltransferase SMYD2 (Smyd2) from Rattus norvegicus (Rat).